A 138-amino-acid polypeptide reads, in one-letter code: Nucleoside diphosphate kinase (138 aa).

Residues Lys9, Phe57, Arg85, Thr91, Arg102, and Asn112 each contribute to the ATP site. Residue His120 is the Pros-phosphohistidine intermediate of the active site.

Belongs to the NDK family. As to quaternary structure, homotetramer. Requires Mg(2+) as cofactor.

Its subcellular location is the cytoplasm. It catalyses the reaction a 2'-deoxyribonucleoside 5'-diphosphate + ATP = a 2'-deoxyribonucleoside 5'-triphosphate + ADP. The catalysed reaction is a ribonucleoside 5'-diphosphate + ATP = a ribonucleoside 5'-triphosphate + ADP. Its function is as follows. Major role in the synthesis of nucleoside triphosphates other than ATP. The ATP gamma phosphate is transferred to the NDP beta phosphate via a ping-pong mechanism, using a phosphorylated active-site intermediate. This Streptococcus agalactiae serotype V (strain ATCC BAA-611 / 2603 V/R) protein is Nucleoside diphosphate kinase.